A 206-amino-acid polypeptide reads, in one-letter code: Ribosomal RNA small subunit methyltransferase G (206 aa).

S-adenosyl-L-methionine-binding positions include glycine 73, leucine 78, valine 124–glutamate 125, and arginine 139.

The protein belongs to the methyltransferase superfamily. RNA methyltransferase RsmG family.

Its subcellular location is the cytoplasm. The catalysed reaction is guanosine(527) in 16S rRNA + S-adenosyl-L-methionine = N(7)-methylguanosine(527) in 16S rRNA + S-adenosyl-L-homocysteine. In terms of biological role, specifically methylates the N7 position of guanine in position 527 of 16S rRNA. In Photobacterium profundum (strain SS9), this protein is Ribosomal RNA small subunit methyltransferase G.